A 123-amino-acid chain; its full sequence is Large ribosomal subunit protein bL12 (123 aa).

It belongs to the bacterial ribosomal protein bL12 family. Homodimer. Part of the ribosomal stalk of the 50S ribosomal subunit. Forms a multimeric L10(L12)X complex, where L10 forms an elongated spine to which 2 to 4 L12 dimers bind in a sequential fashion. Binds GTP-bound translation factors.

Its function is as follows. Forms part of the ribosomal stalk which helps the ribosome interact with GTP-bound translation factors. Is thus essential for accurate translation. This chain is Large ribosomal subunit protein bL12, found in Albidiferax ferrireducens (strain ATCC BAA-621 / DSM 15236 / T118) (Rhodoferax ferrireducens).